Reading from the N-terminus, the 197-residue chain is Imidazoleglycerol-phosphate dehydratase (197 aa).

The protein belongs to the imidazoleglycerol-phosphate dehydratase family.

The protein localises to the cytoplasm. It catalyses the reaction D-erythro-1-(imidazol-4-yl)glycerol 3-phosphate = 3-(imidazol-4-yl)-2-oxopropyl phosphate + H2O. It participates in amino-acid biosynthesis; L-histidine biosynthesis; L-histidine from 5-phospho-alpha-D-ribose 1-diphosphate: step 6/9. The protein is Imidazoleglycerol-phosphate dehydratase of Chromohalobacter salexigens (strain ATCC BAA-138 / DSM 3043 / CIP 106854 / NCIMB 13768 / 1H11).